The primary structure comprises 344 residues: Dihydroorotase (344 aa).

2 residues coordinate Zn(2+): histidine 13 and histidine 15. Substrate is bound by residues 15–17 (HLR) and asparagine 41. Zn(2+)-binding residues include lysine 99, histidine 136, and histidine 174. N6-carboxylysine is present on lysine 99. Histidine 136 contacts substrate. Leucine 219 lines the substrate pocket. Aspartate 247 serves as a coordination point for Zn(2+). Residue aspartate 247 is part of the active site. The substrate site is built by histidine 251 and alanine 263.

The protein belongs to the metallo-dependent hydrolases superfamily. DHOase family. Class II DHOase subfamily. Homodimer. It depends on Zn(2+) as a cofactor.

The catalysed reaction is (S)-dihydroorotate + H2O = N-carbamoyl-L-aspartate + H(+). Its pathway is pyrimidine metabolism; UMP biosynthesis via de novo pathway; (S)-dihydroorotate from bicarbonate: step 3/3. Its function is as follows. Catalyzes the reversible cyclization of carbamoyl aspartate to dihydroorotate. The protein is Dihydroorotase of Acinetobacter baumannii (strain AB307-0294).